The primary structure comprises 113 residues: Thioredoxin H-type (113 aa).

One can recognise a Thioredoxin domain in the interval 2–112 (GGSVIVIDSK…LKALVAKHAA (111 aa)). Residues cysteine 37 and cysteine 40 each act as nucleophile in the active site. Cysteine 37 and cysteine 40 are oxidised to a cystine.

Belongs to the thioredoxin family. Plant H-type subfamily.

It is found in the cytoplasm. Participates in various redox reactions through the reversible oxidation of the active center dithiol to a disulfide. The H form is known to activate a number of cytosolic enzymes. The sequence is that of Thioredoxin H-type (TRXH) from Chlamydomonas reinhardtii (Chlamydomonas smithii).